A 488-amino-acid chain; its full sequence is BRAP2 RING ZnF UBP domain-containing protein 1 (488 aa).

The RING-type; degenerate zinc finger occupies 174–214; sequence CPICLERLDPDTSGIVSTLCDHSFQCSCTSKWTYLSCQVCR. A UBP-type; degenerate zinc finger spans residues 208-301; sequence LSCQVCRLCQ…GKSVEMSTSC (94 aa). Positions 225, 228, 237, 240, 245, 252, 256, and 262 each coordinate Zn(2+). Residues 370-418 adopt a coiled-coil conformation; sequence EQIVVNTMQELQNKIEKCEEEKSGITEVNTKLIKEQDTWRKKAKEIEER. The tract at residues 453 to 488 is disordered; the sequence is MSSDTDGIREGTVLPVPISPEPVSSVRRQKKSNRRK. The span at 465 to 478 shows a compositional bias: low complexity; the sequence is VLPVPISPEPVSSV. The segment covering 479 to 488 has biased composition (basic residues); sequence RRQKKSNRRK.

Component of the heteromeric E3 ligase complex made of BRIZ1 and BRIZ2. Forms heterooligomers with BRIZ2 via coiled-coil domains.

It carries out the reaction S-ubiquitinyl-[E2 ubiquitin-conjugating enzyme]-L-cysteine + [acceptor protein]-L-lysine = [E2 ubiquitin-conjugating enzyme]-L-cysteine + N(6)-ubiquitinyl-[acceptor protein]-L-lysine.. It participates in protein modification; protein ubiquitination. Its function is as follows. RING-type ubiquitin E3 ligase required for seed germination and post-germination growth. This is BRAP2 RING ZnF UBP domain-containing protein 1 from Arabidopsis thaliana (Mouse-ear cress).